Consider the following 555-residue polypeptide: Myo-inositol transporter 2 (555 aa).

Residues 1–61 are Cytoplasmic-facing; that stretch reads MSSTLDTITP…NLVRAENEDK (61 aa). A helical membrane pass occupies residues 62–82; the sequence is VTPYFMFLISVAAIAGFLFGY. Residues 83 to 108 are Extracellular-facing; that stretch reads DTGIVGAALPMVGTSLGHTLSATESE. A helical transmembrane segment spans residues 109 to 129; sequence IITAGTTIGAIFGASILGTMA. The Cytoplasmic portion of the chain corresponds to 130–142; sequence DKLGRKWAMIISD. The helical transmembrane segment at 143 to 163 threads the bilayer; that stretch reads FAFTAGAIIIAASYSVPQIIV. At 164–165 the chain is on the extracellular side; that stretch reads GR. Residues 166–186 form a helical membrane-spanning segment; the sequence is LVLGVGVGGAAVIAPLYIAEL. The Cytoplasmic portion of the chain corresponds to 187-200; it reads APTAVRGRCVGANA. Residues 201 to 221 traverse the membrane as a helical segment; it reads FCIPFGQVVASAIGAGFQAGV. Residues 222–228 are Extracellular-facing; that stretch reads PYHIGWR. A helical transmembrane segment spans residues 229–249; the sequence is VLFGLGVVPSVVQLCLMHFLP. Residues 250-328 lie on the Cytoplasmic side of the membrane; it reads ESPRVLVLRG…AIISVSGVQA (79 aa). A helical membrane pass occupies residues 329-349; that stretch reads FGQLTGFNTLLYYSGTIFGLL. Over 350–355 the chain is Extracellular; sequence GLKNGA. A helical membrane pass occupies residues 356–376; sequence AAGLIPSCLNALFVFIGMSIV. Residues 377 to 385 lie on the Cytoplasmic side of the membrane; sequence DKVGRRKLM. Residues 386-406 form a helical membrane-spanning segment; the sequence is ITFIPGMMIAFTWTIISFHFL. Residues 407–427 are Extracellular-facing; sequence TKPTGGLLLKDYQYSTPLVGS. The chain crosses the membrane as a helical span at residues 428–448; it reads VLGSIVLFVIPFGLTYSHIIW. At 449-461 the chain is on the cytoplasmic side; the sequence is YQSEFLPLEIRAA. Residues 462–482 form a helical membrane-spanning segment; sequence GSAISTTACWLANLVVSVAYL. At 483–487 the chain is on the extracellular side; sequence TQLEK. Residues 488–508 form a helical membrane-spanning segment; the sequence is LGATGTYGLYLGFITIGYIFV. Residues 509-555 lie on the Cytoplasmic side of the membrane; that stretch reads YFCYPETKGLSIDETAEIFIDGFGIEKAHQMLREKRAFAAELYAGRA.

It belongs to the major facilitator superfamily. Sugar transporter (TC 2.A.1.1) family.

Its subcellular location is the cell membrane. It catalyses the reaction myo-inositol(out) + H(+)(out) = myo-inositol(in) + H(+)(in). Its function is as follows. Transporter for myo-inositol. This chain is Myo-inositol transporter 2, found in Cryptococcus neoformans var. grubii serotype A (strain H99 / ATCC 208821 / CBS 10515 / FGSC 9487) (Filobasidiella neoformans var. grubii).